A 530-amino-acid chain; its full sequence is Bifunctional purine biosynthesis protein PurH (530 aa).

One can recognise an MGS-like domain in the interval 1-147; the sequence is MPSIKRALIS…KNWKHVAIVT (147 aa).

It belongs to the PurH family.

It catalyses the reaction (6R)-10-formyltetrahydrofolate + 5-amino-1-(5-phospho-beta-D-ribosyl)imidazole-4-carboxamide = 5-formamido-1-(5-phospho-D-ribosyl)imidazole-4-carboxamide + (6S)-5,6,7,8-tetrahydrofolate. It carries out the reaction IMP + H2O = 5-formamido-1-(5-phospho-D-ribosyl)imidazole-4-carboxamide. Its pathway is purine metabolism; IMP biosynthesis via de novo pathway; 5-formamido-1-(5-phospho-D-ribosyl)imidazole-4-carboxamide from 5-amino-1-(5-phospho-D-ribosyl)imidazole-4-carboxamide (10-formyl THF route): step 1/1. It functions in the pathway purine metabolism; IMP biosynthesis via de novo pathway; IMP from 5-formamido-1-(5-phospho-D-ribosyl)imidazole-4-carboxamide: step 1/1. The protein is Bifunctional purine biosynthesis protein PurH of Neisseria meningitidis serogroup A / serotype 4A (strain DSM 15465 / Z2491).